A 38-amino-acid chain; its full sequence is Photosystem II reaction center protein L (38 aa).

A helical membrane pass occupies residues 17-37 (SLYWGLLLIFVLAVLFSNYFF).

Belongs to the PsbL family. In terms of assembly, PSII is composed of 1 copy each of membrane proteins PsbA, PsbB, PsbC, PsbD, PsbE, PsbF, PsbH, PsbI, PsbJ, PsbK, PsbL, PsbM, PsbT, PsbX, PsbY, PsbZ, Psb30/Ycf12, at least 3 peripheral proteins of the oxygen-evolving complex and a large number of cofactors. It forms dimeric complexes.

The protein resides in the plastid. The protein localises to the chloroplast thylakoid membrane. In terms of biological role, one of the components of the core complex of photosystem II (PSII). PSII is a light-driven water:plastoquinone oxidoreductase that uses light energy to abstract electrons from H(2)O, generating O(2) and a proton gradient subsequently used for ATP formation. It consists of a core antenna complex that captures photons, and an electron transfer chain that converts photonic excitation into a charge separation. This subunit is found at the monomer-monomer interface and is required for correct PSII assembly and/or dimerization. The polypeptide is Photosystem II reaction center protein L (Ananas comosus (Pineapple)).